Consider the following 399-residue polypeptide: Chorismate synthase (399 aa).

The NADP(+) site is built by Arg-40 and Arg-46. FMN is bound by residues 135–137 (RAS), 256–257 (QA), Gly-301, 316–320 (KPIAT), and Arg-342.

The protein belongs to the chorismate synthase family. In terms of assembly, homotetramer. Requires FMNH2 as cofactor.

It carries out the reaction 5-O-(1-carboxyvinyl)-3-phosphoshikimate = chorismate + phosphate. It participates in metabolic intermediate biosynthesis; chorismate biosynthesis; chorismate from D-erythrose 4-phosphate and phosphoenolpyruvate: step 7/7. Functionally, catalyzes the anti-1,4-elimination of the C-3 phosphate and the C-6 proR hydrogen from 5-enolpyruvylshikimate-3-phosphate (EPSP) to yield chorismate, which is the branch point compound that serves as the starting substrate for the three terminal pathways of aromatic amino acid biosynthesis. This reaction introduces a second double bond into the aromatic ring system. The chain is Chorismate synthase from Arthrobacter sp. (strain FB24).